The primary structure comprises 342 residues: L-threonine 3-dehydrogenase (342 aa).

Cysteine 38 contacts Zn(2+). Catalysis depends on charge relay system residues threonine 40 and histidine 43. The Zn(2+) site is built by histidine 63, glutamate 64, cysteine 93, cysteine 96, cysteine 99, and cysteine 107. NAD(+)-binding positions include isoleucine 175, aspartate 195, arginine 200, 262–264 (LGI), and 286–287 (IY).

Belongs to the zinc-containing alcohol dehydrogenase family. As to quaternary structure, homotetramer. The cofactor is Zn(2+).

The protein localises to the cytoplasm. The catalysed reaction is L-threonine + NAD(+) = (2S)-2-amino-3-oxobutanoate + NADH + H(+). It functions in the pathway amino-acid degradation; L-threonine degradation via oxydo-reductase pathway; glycine from L-threonine: step 1/2. Its function is as follows. Catalyzes the NAD(+)-dependent oxidation of L-threonine to 2-amino-3-ketobutyrate. In Aeromonas hydrophila subsp. hydrophila (strain ATCC 7966 / DSM 30187 / BCRC 13018 / CCUG 14551 / JCM 1027 / KCTC 2358 / NCIMB 9240 / NCTC 8049), this protein is L-threonine 3-dehydrogenase.